The following is a 51-amino-acid chain: Ovomucoid (51 aa).

Residues 3 to 51 enclose the Kazal-like domain; it reads VDCSGYPKPDCTLESFPLCGSDNQTYSNKCAFCNAAVERNVTLRHLGEC. 3 cysteine pairs are disulfide-bonded: Cys-5-Cys-35, Cys-13-Cys-32, and Cys-21-Cys-51. An N-linked (GlcNAc...) asparagine glycan is attached at Asn-42.

Its subcellular location is the secreted. The polypeptide is Ovomucoid (Rhynchotus rufescens (Red-winged tinamou)).